A 285-amino-acid polypeptide reads, in one-letter code: 4-diphosphocytidyl-2-C-methyl-D-erythritol kinase (285 aa).

Residue K12 is part of the active site. Position 95–105 (95–105) interacts with ATP; sequence PVGAGLAGGST. D137 is a catalytic residue.

It belongs to the GHMP kinase family. IspE subfamily.

It catalyses the reaction 4-CDP-2-C-methyl-D-erythritol + ATP = 4-CDP-2-C-methyl-D-erythritol 2-phosphate + ADP + H(+). It participates in isoprenoid biosynthesis; isopentenyl diphosphate biosynthesis via DXP pathway; isopentenyl diphosphate from 1-deoxy-D-xylulose 5-phosphate: step 3/6. Its function is as follows. Catalyzes the phosphorylation of the position 2 hydroxy group of 4-diphosphocytidyl-2C-methyl-D-erythritol. In Syntrophomonas wolfei subsp. wolfei (strain DSM 2245B / Goettingen), this protein is 4-diphosphocytidyl-2-C-methyl-D-erythritol kinase.